A 594-amino-acid polypeptide reads, in one-letter code: UvrABC system protein C (594 aa).

The 78-residue stretch at 17–94 folds into the GIY-YIG domain; it reads LEPGCYLMKD…IKQYQPRYNI (78 aa). The UVR domain maps to 199-234; it reads KTILNHLEERMNKASEQLDFEQAKEYRDMIQHIHNL.

The protein belongs to the UvrC family. In terms of assembly, interacts with UvrB in an incision complex.

The protein resides in the cytoplasm. The UvrABC repair system catalyzes the recognition and processing of DNA lesions. UvrC both incises the 5' and 3' sides of the lesion. The N-terminal half is responsible for the 3' incision and the C-terminal half is responsible for the 5' incision. In Staphylococcus epidermidis (strain ATCC 35984 / DSM 28319 / BCRC 17069 / CCUG 31568 / BM 3577 / RP62A), this protein is UvrABC system protein C.